Here is a 160-residue protein sequence, read N- to C-terminus: Cytochrome b6-f complex subunit 4 (160 aa).

Transmembrane regions (helical) follow at residues 36 to 56, 95 to 115, and 128 to 148; these read LLYI…GLAV, LLGI…PFIE, and IAMA…IGAC.

This sequence belongs to the cytochrome b family. PetD subfamily. As to quaternary structure, the 4 large subunits of the cytochrome b6-f complex are cytochrome b6, subunit IV (17 kDa polypeptide, PetD), cytochrome f and the Rieske protein, while the 4 small subunits are PetG, PetL, PetM and PetN. The complex functions as a dimer.

The protein localises to the cellular thylakoid membrane. Functionally, component of the cytochrome b6-f complex, which mediates electron transfer between photosystem II (PSII) and photosystem I (PSI), cyclic electron flow around PSI, and state transitions. This is Cytochrome b6-f complex subunit 4 from Prochlorococcus marinus (strain MIT 9313).